Consider the following 215-residue polypeptide: Large ribosomal subunit protein uL3 (215 aa).

Gln151 is modified (N5-methylglutamine).

Belongs to the universal ribosomal protein uL3 family. As to quaternary structure, part of the 50S ribosomal subunit. Forms a cluster with proteins L14 and L19. Post-translationally, methylated by PrmB.

Its function is as follows. One of the primary rRNA binding proteins, it binds directly near the 3'-end of the 23S rRNA, where it nucleates assembly of the 50S subunit. The sequence is that of Large ribosomal subunit protein uL3 from Rickettsia bellii (strain OSU 85-389).